The chain runs to 487 residues: MNLLVLSVILAIIIYLIFKRNYKYSPSKINSKIPGPIGLPIFGNILSLDNKNGIHTTFQKWFKIYGPIYSVNMGNKSAVVLTGFPIIKKAFIDNSEAFAPHYTFESRYKLNKCSDITQENGKNQSALKRIFLSELTVTRIKKQESHIQNEIVKLMKVLDKHSEDGKPFLLNNYFSMFSINIISRFLFGIDFPYQDFEETSDLMVGIRDLLIASGEIVLSDFLPIPHSKRSKLYTSYQALVVQIETLVKSHKYKEDDECMLSKLMIEHDKGNIPWDAVISNCNTIITAGSDSTSSTALFFLIEMMNNPTIQTKVYNDIVVSFEQNQQADDYMNESMVILKYSKYRSLIPYLSLALKENYRKHPAAPFGAPHETTQETVIEGYTIAKGTMIFQNIYATQRSDTFYSQPDEFIPERWNGDENSQTLISFGTGIRDCIGKSLAYNEIFTIIASVLNRYEFINPNPSIPFDDNGIPGLTTQCKNTVVQIKKR.

The helical transmembrane segment at 1–18 (MNLLVLSVILAIIIYLIF) threads the bilayer. Cys-433 contacts heme.

This sequence belongs to the cytochrome P450 family. Requires heme as cofactor.

It is found in the membrane. The polypeptide is Probable cytochrome P450 513B1 (cyp513B1) (Dictyostelium discoideum (Social amoeba)).